A 104-amino-acid chain; its full sequence is Flagellar hook-basal body complex protein FliE (104 aa).

This sequence belongs to the FliE family.

The protein localises to the bacterial flagellum basal body. The sequence is that of Flagellar hook-basal body complex protein FliE from Salmonella agona (strain SL483).